A 111-amino-acid polypeptide reads, in one-letter code: Probable 4-amino-4-deoxy-L-arabinose-phosphoundecaprenol flippase subunit ArnE (111 aa).

3 consecutive transmembrane segments (helical) span residues 38 to 58 (LWLGLALICMGAAMVLWLLVL), 61 to 81 (LPVGIAYPMLSLNFVWVTLAA), and 91 to 111 (PRHWLGVALIISGIIILGSAA). In terms of domain architecture, EamA spans 40-109 (LGLALICMGA…IISGIIILGS (70 aa)).

Belongs to the ArnE family. Heterodimer of ArnE and ArnF.

It is found in the cell inner membrane. It functions in the pathway bacterial outer membrane biogenesis; lipopolysaccharide biosynthesis. Functionally, translocates 4-amino-4-deoxy-L-arabinose-phosphoundecaprenol (alpha-L-Ara4N-phosphoundecaprenol) from the cytoplasmic to the periplasmic side of the inner membrane. The polypeptide is Probable 4-amino-4-deoxy-L-arabinose-phosphoundecaprenol flippase subunit ArnE (Salmonella newport (strain SL254)).